Here is a 175-residue protein sequence, read N- to C-terminus: uncharacterized protein (175 aa).

Residues 1–17 (MKVEGGESMHESEEGRD) show a composition bias toward basic and acidic residues. The segment at 1–21 (MKVEGGESMHESEEGRDVPNG) is disordered.

This is an uncharacterized protein from Bacillus thuringiensis subsp. kurstaki.